A 305-amino-acid polypeptide reads, in one-letter code: Homoserine O-acetyltransferase (305 aa).

The Acyl-thioester intermediate role is filled by Cys142. Positions 163 and 192 each coordinate substrate. His235 acts as the Proton acceptor in catalysis. Glu237 is an active-site residue. Position 249 (Arg249) interacts with substrate.

The protein belongs to the MetA family.

It localises to the cytoplasm. The enzyme catalyses L-homoserine + acetyl-CoA = O-acetyl-L-homoserine + CoA. The protein operates within amino-acid biosynthesis; L-methionine biosynthesis via de novo pathway; O-acetyl-L-homoserine from L-homoserine: step 1/1. Its function is as follows. Transfers an acetyl group from acetyl-CoA to L-homoserine, forming acetyl-L-homoserine. The polypeptide is Homoserine O-acetyltransferase (Phocaeicola vulgatus (strain ATCC 8482 / DSM 1447 / JCM 5826 / CCUG 4940 / NBRC 14291 / NCTC 11154) (Bacteroides vulgatus)).